The primary structure comprises 281 residues: MVWFKRVKPFIRTTDRRDVPEGLWSKCEDCGAMLHRRQLEENLNTCNECGHHFRISPYRYFSILFDNEEFTEFDDCLRAADPLTFVDTKKYPDRVHDTIEKSGKTEACRNAFGKSAGADLVISAMDFGFIGGSMGSVVGEKISRAADKAIELNAPLIVISQSGGARMMEGAFSLMQMAKTAARLTRLGENRLPFISLMTDPTMGGISASFAMLGDLNISEPKALIGFAGPRVIRDTIKRDLPEGFQRAEFLQEHGFVDMIVHRKELKQRLAKTLAMMRVEG.

In terms of domain architecture, CoA carboxyltransferase N-terminal spans 23 to 281 (LWSKCEDCGA…KTLAMMRVEG (259 aa)). The Zn(2+) site is built by C27, C30, C46, and C49. The segment at 27 to 49 (CEDCGAMLHRRQLEENLNTCNEC) adopts a C4-type zinc-finger fold.

Belongs to the AccD/PCCB family. In terms of assembly, acetyl-CoA carboxylase is a heterohexamer composed of biotin carboxyl carrier protein (AccB), biotin carboxylase (AccC) and two subunits each of ACCase subunit alpha (AccA) and ACCase subunit beta (AccD). It depends on Zn(2+) as a cofactor.

The protein localises to the cytoplasm. The enzyme catalyses N(6)-carboxybiotinyl-L-lysyl-[protein] + acetyl-CoA = N(6)-biotinyl-L-lysyl-[protein] + malonyl-CoA. It participates in lipid metabolism; malonyl-CoA biosynthesis; malonyl-CoA from acetyl-CoA: step 1/1. Functionally, component of the acetyl coenzyme A carboxylase (ACC) complex. Biotin carboxylase (BC) catalyzes the carboxylation of biotin on its carrier protein (BCCP) and then the CO(2) group is transferred by the transcarboxylase to acetyl-CoA to form malonyl-CoA. The polypeptide is Acetyl-coenzyme A carboxylase carboxyl transferase subunit beta (Chlorobium luteolum (strain DSM 273 / BCRC 81028 / 2530) (Pelodictyon luteolum)).